Here is a 407-residue protein sequence, read N- to C-terminus: PWWP domain-containing protein 3 (407 aa).

The disordered stretch occupies residues 1–46 (MMVARTRSQKRKLEEINNQKKIKTKKKATGQQTSNTKNLRDVKKKG). The PWWP domain occupies 63 to 129 (NGEYVLAKMS…SSNVLPLTVD (67 aa)). A phosphoserine mark is found at serine 160 and serine 162. The tract at residues 163–248 (DVEEDEFEPE…PIPSPKKTAK (86 aa)) is disordered. Positions 172–208 (ENTRKKLQKPIEKPKKEKIEATPKIDGGKRLKNEKSS) are enriched in basic and acidic residues. Phosphoserine occurs at positions 236, 238, and 242.

In terms of assembly, component of the mst2 complex composed of at least eaf6, mst2, nto1, pdp3, ptf1, ptf2 and tfg3.

It is found in the nucleus. Component of the mst2 complex which is a highly specific H3 lysine 14 (H3K14) acetyltransferase that functions together with gcn5 to regulate global levels of H3K14 acetylation (H3K14ac), critical for DNA damage checkpoint activation. The chain is PWWP domain-containing protein 3 (pdp3) from Schizosaccharomyces pombe (strain 972 / ATCC 24843) (Fission yeast).